A 999-amino-acid chain; its full sequence is Probable K(+)/H(+) antiporter subunit A/B (999 aa).

A disordered region spans residues methionine 1–glutamine 20. A run of 24 helical transmembrane segments spans residues leucine 31–phenylalanine 48, alanine 63–leucine 85, phenylalanine 106–tyrosine 128, phenylalanine 138–leucine 160, alanine 162–histidine 181, methionine 191–isoleucine 213, proline 233–phenylalanine 255, serine 270–valine 292, tryptophan 299–glutamine 321, leucine 336–isoleucine 358, glycine 389–valine 411, tyrosine 442–phenylalanine 464, phenylalanine 488–threonine 510, glycine 530–methionine 552, arginine 604–glycine 621, alanine 636–tyrosine 653, leucine 660–alanine 682, alanine 686–proline 708, leucine 729–threonine 751, threonine 788–leucine 807, phenylalanine 846–leucine 868, phenylalanine 878–valine 900, serine 913–threonine 935, and isoleucine 955–alanine 977.

It in the N-terminal section; belongs to the CPA3 antiporters (TC 2.A.63) subunit A family. In the C-terminal section; belongs to the CPA3 antiporters (TC 2.A.63) subunit B family. As to quaternary structure, may form a heterooligomeric complex that consists of six subunits: PhaAB, PhaC, PhaD, PhaE, PhaF and PhaG.

Its subcellular location is the cell membrane. Part of a K(+) efflux system which is required for the adaptation of R.meliloti to alkaline pH as well as for the infection process during symbiotic nodule development. The protein is Probable K(+)/H(+) antiporter subunit A/B (phaAB) of Rhizobium meliloti (strain 1021) (Ensifer meliloti).